We begin with the raw amino-acid sequence, 374 residues long: Eukaryotic translation initiation factor 3 subunit M (374 aa).

Serine 2 is subject to N-acetylserine. A phosphoserine mark is found at serine 2 and serine 152. The 160-residue stretch at 180 to 339 folds into the PCI domain; the sequence is AASKVMVELL…RKVVVSHSTH (160 aa). Lysine 254 is subject to N6-acetyllysine. Serine 367 carries the phosphoserine modification.

This sequence belongs to the eIF-3 subunit M family. Component of the eukaryotic translation initiation factor 3 (eIF-3) complex, which is composed of 13 subunits: EIF3A, EIF3B, EIF3C, EIF3D, EIF3E, EIF3F, EIF3G, EIF3H, EIF3I, EIF3J, EIF3K, EIF3L and EIF3M. The eIF-3 complex appears to include 3 stable modules: module A is composed of EIF3A, EIF3B, EIF3G and EIF3I; module B is composed of EIF3F, EIF3H, and EIF3M; and module C is composed of EIF3C, EIF3D, EIF3E, EIF3K and EIF3L. EIF3C of module C binds EIF3B of module A and EIF3H of module B, thereby linking the three modules. EIF3J is a labile subunit that binds to the eIF-3 complex via EIF3B. The eIF-3 complex interacts with RPS6KB1 under conditions of nutrient depletion. Mitogenic stimulation leads to binding and activation of a complex composed of MTOR and RPTOR, leading to phosphorylation and release of RPS6KB1 and binding of EIF4B to eIF-3.

It localises to the cytoplasm. Component of the eukaryotic translation initiation factor 3 (eIF-3) complex, which is required for several steps in the initiation of protein synthesis. The eIF-3 complex associates with the 40S ribosome and facilitates the recruitment of eIF-1, eIF-1A, eIF-2:GTP:methionyl-tRNAi and eIF-5 to form the 43S pre-initiation complex (43S PIC). The eIF-3 complex stimulates mRNA recruitment to the 43S PIC and scanning of the mRNA for AUG recognition. The eIF-3 complex is also required for disassembly and recycling of post-termination ribosomal complexes and subsequently prevents premature joining of the 40S and 60S ribosomal subunits prior to initiation. The eIF-3 complex specifically targets and initiates translation of a subset of mRNAs involved in cell proliferation, including cell cycling, differentiation and apoptosis, and uses different modes of RNA stem-loop binding to exert either translational activation or repression. In Pongo abelii (Sumatran orangutan), this protein is Eukaryotic translation initiation factor 3 subunit M.